The primary structure comprises 313 residues: MNKLVFCLMGPTASGKTGLACELLTHFPFEIISVDSAMIYRDMNIGTAKPSIHELQSAPHYLIDIKDPVESYSAAQFCTDALSLCAAIIKRGNIPLLVGGTMMYFNALQKGLATLPEADEAVRKRLEEEALSQGWDFLYQKLSQLDPVTAARIHAHDTQRIQRALEVYYLTGSTLSTYLTGPHEQPDYCFVNLALFPEQRSWLHERIAQRFDAMLSEGFIEEVQQLQAKWPIQINLPSMRCVGYRQILEYLAGHYDYETMREKGIAATRQLAKRQLTWLRHWEGALFYDSQNVGFNTDIIAKIREILDNTVSN.

Glycine 10–threonine 17 contributes to the ATP binding site. Threonine 12–threonine 17 lines the substrate pocket. Interaction with substrate tRNA stretches follow at residues aspartate 35–methionine 38, glutamine 159–arginine 163, and arginine 240–arginine 245.

It belongs to the IPP transferase family. In terms of assembly, monomer. Mg(2+) serves as cofactor.

The enzyme catalyses adenosine(37) in tRNA + dimethylallyl diphosphate = N(6)-dimethylallyladenosine(37) in tRNA + diphosphate. In terms of biological role, catalyzes the transfer of a dimethylallyl group onto the adenine at position 37 in tRNAs that read codons beginning with uridine, leading to the formation of N6-(dimethylallyl)adenosine (i(6)A). This Legionella pneumophila (strain Lens) protein is tRNA dimethylallyltransferase.